The following is a 136-amino-acid chain: Large ribosomal subunit protein bL17 (136 aa).

Belongs to the bacterial ribosomal protein bL17 family. As to quaternary structure, part of the 50S ribosomal subunit. Contacts protein L32.

This chain is Large ribosomal subunit protein bL17, found in Rickettsia canadensis (strain McKiel).